The following is a 272-amino-acid chain: MICOS complex subunit MIC27 (272 aa).

The transit peptide at 1–24 (MAAKVARLAAAASSLPFVCAVYAE) directs the protein to the mitochondrion. Residues 28–107 (SKSQLVKPKQ…YVYLKNPPPD (80 aa)) are Mitochondrial intermembrane-facing. Residues 108–126 (FLPRVGIITISGLAGVVLA) traverse the membrane as a helical segment. The Mitochondrial matrix portion of the chain corresponds to 127–134 (RKDSRFKK). Residues 135 to 152 (IAYPLGLTTLGISVCYPA) traverse the membrane as a helical segment. The Mitochondrial intermembrane segment spans residues 153–272 (QAVVIAKITG…EDVDMYSTRS (120 aa)). The tract at residues 187-272 (SKLQQESKSV…EDVDMYSTRS (86 aa)) is disordered. Polar residues-rich tracts occupy residues 188 to 198 (KLQQESKSVTQ) and 206 to 245 (ISNV…TVKT).

It belongs to the apolipoprotein O/MICOS complex subunit Mic27 family. Component of the mitochondrial contact site and cristae organizing system (MICOS) complex (also known as MINOS or MitOS complex).

Its subcellular location is the mitochondrion inner membrane. Component of the MICOS complex, a large protein complex of the mitochondrial inner membrane that plays crucial roles in the maintenance of crista junctions, inner membrane architecture, and formation of contact sites to the outer membrane. The sequence is that of MICOS complex subunit MIC27 (APOOL) from Gallus gallus (Chicken).